A 54-amino-acid polypeptide reads, in one-letter code: uncharacterized protein (54 aa).

The chain crosses the membrane as a helical span at residues 21-43 (SYVVCLYMCGSDCACICVLACVV).

It is found in the membrane. This is an uncharacterized protein from Saccharomyces cerevisiae (strain ATCC 204508 / S288c) (Baker's yeast).